The chain runs to 517 residues: Maturase K (517 aa).

It belongs to the intron maturase 2 family. MatK subfamily.

It is found in the plastid. The protein resides in the chloroplast. Usually encoded in the trnK tRNA gene intron. Probably assists in splicing its own and other chloroplast group II introns. The polypeptide is Maturase K (Veronica arvensis (Wall speedwell)).